The primary structure comprises 414 residues: Putative competence-damage inducible protein (414 aa).

This sequence belongs to the CinA family.

The polypeptide is Putative competence-damage inducible protein (Listeria monocytogenes serovar 1/2a (strain ATCC BAA-679 / EGD-e)).